A 110-amino-acid chain; its full sequence is NADH-quinone oxidoreductase subunit K (110 aa).

Transmembrane regions (helical) follow at residues leucine 13 to methionine 33, isoleucine 41 to isoleucine 61, and isoleucine 73 to tyrosine 93.

Belongs to the complex I subunit 4L family. In terms of assembly, NDH-1 is composed of 14 different subunits. Subunits NuoA, H, J, K, L, M, N constitute the membrane sector of the complex.

It is found in the cell inner membrane. It catalyses the reaction a quinone + NADH + 5 H(+)(in) = a quinol + NAD(+) + 4 H(+)(out). In terms of biological role, NDH-1 shuttles electrons from NADH, via FMN and iron-sulfur (Fe-S) centers, to quinones in the respiratory chain. The immediate electron acceptor for the enzyme in this species is believed to be ubiquinone. Couples the redox reaction to proton translocation (for every two electrons transferred, four hydrogen ions are translocated across the cytoplasmic membrane), and thus conserves the redox energy in a proton gradient. The chain is NADH-quinone oxidoreductase subunit K from Rickettsia conorii (strain ATCC VR-613 / Malish 7).